We begin with the raw amino-acid sequence, 408 residues long: Cobalt-precorrin-5B C(1)-methyltransferase (408 aa).

It belongs to the CbiD family.

The enzyme catalyses Co-precorrin-5B + S-adenosyl-L-methionine = Co-precorrin-6A + S-adenosyl-L-homocysteine. It participates in cofactor biosynthesis; adenosylcobalamin biosynthesis; cob(II)yrinate a,c-diamide from sirohydrochlorin (anaerobic route): step 6/10. Catalyzes the methylation of C-1 in cobalt-precorrin-5B to form cobalt-precorrin-6A. In Clostridioides difficile (strain 630) (Peptoclostridium difficile), this protein is Cobalt-precorrin-5B C(1)-methyltransferase.